A 330-amino-acid chain; its full sequence is Ribosomal RNA small subunit methyltransferase H (330 aa).

S-adenosyl-L-methionine-binding positions include 35–37 (GGY), Asp53, Phe80, Asp101, and Gln108.

This sequence belongs to the methyltransferase superfamily. RsmH family.

It is found in the cytoplasm. It carries out the reaction cytidine(1402) in 16S rRNA + S-adenosyl-L-methionine = N(4)-methylcytidine(1402) in 16S rRNA + S-adenosyl-L-homocysteine + H(+). Specifically methylates the N4 position of cytidine in position 1402 (C1402) of 16S rRNA. The protein is Ribosomal RNA small subunit methyltransferase H of Rhodopseudomonas palustris (strain BisB18).